Reading from the N-terminus, the 101-residue chain is MAKMSMKNRELKRQLTVAKYAKKRAELKAIIVDLNASPEARWEATVALQKQPRDASAARMRNRCRITGRPHGVYRKFGLGRNKLREAAMRGDVPGLVKASW.

This sequence belongs to the universal ribosomal protein uS14 family. As to quaternary structure, part of the 30S ribosomal subunit. Contacts proteins S3 and S10.

Its function is as follows. Binds 16S rRNA, required for the assembly of 30S particles and may also be responsible for determining the conformation of the 16S rRNA at the A site. This Pseudomonas syringae pv. syringae (strain B728a) protein is Small ribosomal subunit protein uS14.